The primary structure comprises 710 residues: DNA ligase (710 aa).

The tract at residues 1–26 (MPEDAIGQQVPPEQEAAGAEPTSAAR) is disordered. Residues 53-57 (DAEFD), 102-103 (SL), and glutamate 132 each bind NAD(+). The N6-AMP-lysine intermediate role is filled by lysine 134. 4 residues coordinate NAD(+): arginine 155, glutamate 196, lysine 312, and lysine 336. Cysteine 430, cysteine 433, cysteine 449, and cysteine 455 together coordinate Zn(2+). The BRCT domain occupies 619-708 (EGPRPLEGMT…PDAAREVARV (90 aa)).

This sequence belongs to the NAD-dependent DNA ligase family. LigA subfamily. The cofactor is Mg(2+). Requires Mn(2+) as cofactor.

The enzyme catalyses NAD(+) + (deoxyribonucleotide)n-3'-hydroxyl + 5'-phospho-(deoxyribonucleotide)m = (deoxyribonucleotide)n+m + AMP + beta-nicotinamide D-nucleotide.. DNA ligase that catalyzes the formation of phosphodiester linkages between 5'-phosphoryl and 3'-hydroxyl groups in double-stranded DNA using NAD as a coenzyme and as the energy source for the reaction. It is essential for DNA replication and repair of damaged DNA. This Salinispora arenicola (strain CNS-205) protein is DNA ligase.